We begin with the raw amino-acid sequence, 99 residues long: NADH-ubiquinone oxidoreductase chain 4L (99 aa).

3 helical membrane passes run 4-24, 29-49, and 63-83; these read MFLMFYLSMIMFLFGCMVFVS, LLSTLLSLEYMVLSLFIFLFF, and FFLTFCVCEGVLGLSILVSMI.

Belongs to the complex I subunit 4L family.

Its subcellular location is the mitochondrion membrane. The catalysed reaction is a ubiquinone + NADH + 5 H(+)(in) = a ubiquinol + NAD(+) + 4 H(+)(out). Core subunit of the mitochondrial membrane respiratory chain NADH dehydrogenase (Complex I) that is believed to belong to the minimal assembly required for catalysis. Complex I functions in the transfer of electrons from NADH to the respiratory chain. The immediate electron acceptor for the enzyme is believed to be ubiquinone. In Anopheles gambiae (African malaria mosquito), this protein is NADH-ubiquinone oxidoreductase chain 4L (mt:ND4L).